Reading from the N-terminus, the 349-residue chain is MSNKPSLSYKDAGVDIDAGDALVQRIKSVAKATSRPEVVGGLGGFGALCRIPTGYTSPLLVSGTDGVGTKLKLALQLNRHDTIGIDLVAMCVNDLLVCGAEPLFFLDYYATGKLDVDVAATVVTGIGEGCKLSNCALIGGETAEMPGMYQDDDYDLAGFCVGVVEEAEVITGENVTEGDVLIALASSGAHSNGYSLVRKVIEVSGVDVTSSNEQLDGQSIQDALMAPTRIYVKAIKALQDTLGSSALHAMSHITGGGLTDNLPRVLPDHLAASIDTSSWQFSELFTWLQTQGNIEQSEMYRTFNCGVGFVIVVPKDKADAAIKTLTDAGEKAWKLGEMVSREADAVVYR.

The protein belongs to the AIR synthase family.

It is found in the cytoplasm. The enzyme catalyses 2-formamido-N(1)-(5-O-phospho-beta-D-ribosyl)acetamidine + ATP = 5-amino-1-(5-phospho-beta-D-ribosyl)imidazole + ADP + phosphate + H(+). The protein operates within purine metabolism; IMP biosynthesis via de novo pathway; 5-amino-1-(5-phospho-D-ribosyl)imidazole from N(2)-formyl-N(1)-(5-phospho-D-ribosyl)glycinamide: step 2/2. The protein is Phosphoribosylformylglycinamidine cyclo-ligase of Psychrobacter arcticus (strain DSM 17307 / VKM B-2377 / 273-4).